The primary structure comprises 282 residues: Probable endonuclease 4 (282 aa).

Zn(2+) contacts are provided by His-66, His-106, Glu-143, Asp-177, His-180, His-214, Asp-227, His-229, and Glu-259.

The protein belongs to the AP endonuclease 2 family. The cofactor is Zn(2+).

It carries out the reaction Endonucleolytic cleavage to 5'-phosphooligonucleotide end-products.. Endonuclease IV plays a role in DNA repair. It cleaves phosphodiester bonds at apurinic or apyrimidinic (AP) sites, generating a 3'-hydroxyl group and a 5'-terminal sugar phosphate. The chain is Probable endonuclease 4 from Nitratidesulfovibrio vulgaris (strain ATCC 29579 / DSM 644 / CCUG 34227 / NCIMB 8303 / VKM B-1760 / Hildenborough) (Desulfovibrio vulgaris).